The sequence spans 148 residues: Ribonuclease H (148 aa).

The 143-residue stretch at 1–143 folds into the RNase H type-1 domain; that stretch reads MNQVVIYTDG…ADMLANKGVE (143 aa). Mg(2+) contacts are provided by Asp9, Glu47, Asp69, and Asp135.

The protein belongs to the RNase H family. As to quaternary structure, monomer. Requires Mg(2+) as cofactor.

The protein localises to the cytoplasm. The enzyme catalyses Endonucleolytic cleavage to 5'-phosphomonoester.. Endonuclease that specifically degrades the RNA of RNA-DNA hybrids. This is Ribonuclease H from Acidovorax sp. (strain JS42).